We begin with the raw amino-acid sequence, 185 residues long: Lysozyme g (185 aa).

Intrachain disulfides connect cysteine 4/cysteine 60 and cysteine 18/cysteine 29. The active site involves glutamate 73.

It belongs to the glycosyl hydrolase 23 family.

The protein resides in the secreted. It carries out the reaction Hydrolysis of (1-&gt;4)-beta-linkages between N-acetylmuramic acid and N-acetyl-D-glucosamine residues in a peptidoglycan and between N-acetyl-D-glucosamine residues in chitodextrins.. The protein is Lysozyme g of Cygnus atratus (Black swan).